A 255-amino-acid chain; its full sequence is Coniferyl-alcohol dehydrogenase (255 aa).

Residues 12–17, Asp-36, 51–52, and Gly-77 contribute to the NAD(+) site; these read GVSSGI and DL. Residue Ser-117 participates in substrate binding. NAD(+) contacts are provided by Tyr-157 and Lys-161. Residue Tyr-157 is the Proton acceptor of the active site.

This sequence belongs to the short-chain dehydrogenases/reductases (SDR) family.

The catalysed reaction is (E)-coniferol + NADP(+) = (E)-coniferaldehyde + NADPH + H(+). Functionally, catalyzes the conversion of coniferyl alcohol into coniferyl aldehyde in the eugenol degradation pathway. Specific for coniferyl alcohol; does not act on cinnamyl alcohol, 4-coumaryl alcohol or sinapyl alcohol. The sequence is that of Coniferyl-alcohol dehydrogenase (calA) from Pseudomonas sp. (strain HR199 / DSM 7063).